The primary structure comprises 95 residues: Small ribosomal subunit protein uS19 (95 aa).

It belongs to the universal ribosomal protein uS19 family.

Its function is as follows. Protein S19 forms a complex with S13 that binds strongly to the 16S ribosomal RNA. This Thermodesulfovibrio yellowstonii (strain ATCC 51303 / DSM 11347 / YP87) protein is Small ribosomal subunit protein uS19.